The sequence spans 151 residues: Protein NrdI (151 aa).

Belongs to the NrdI family.

In terms of biological role, probably involved in ribonucleotide reductase function. This chain is Protein NrdI, found in Mesoplasma florum (strain ATCC 33453 / NBRC 100688 / NCTC 11704 / L1) (Acholeplasma florum).